A 339-amino-acid polypeptide reads, in one-letter code: DNA-directed RNA polymerase subunit alpha (339 aa).

Residues 1 to 235 (MVIQKNWQEL…DQLQIFVNFE (235 aa)) are alpha N-terminal domain (alpha-NTD). The segment at 251–339 (FNPALLKKVD…DLAKRFEEHY (89 aa)) is alpha C-terminal domain (alpha-CTD).

Belongs to the RNA polymerase alpha chain family. As to quaternary structure, homodimer. The RNAP catalytic core consists of 2 alpha, 1 beta, 1 beta' and 1 omega subunit. When a sigma factor is associated with the core the holoenzyme is formed, which can initiate transcription.

The catalysed reaction is RNA(n) + a ribonucleoside 5'-triphosphate = RNA(n+1) + diphosphate. Functionally, DNA-dependent RNA polymerase catalyzes the transcription of DNA into RNA using the four ribonucleoside triphosphates as substrates. This chain is DNA-directed RNA polymerase subunit alpha, found in Methylobacterium sp. (strain 4-46).